A 393-amino-acid polypeptide reads, in one-letter code: N-lysine methyltransferase KMT5A (393 aa).

The interval 68-88 (PGPEMVERRGPGRPRTDGENV) is disordered. The span at 72 to 85 (MVERRGPGRPRTDG) shows a compositional bias: basic and acidic residues. Position 100 is a phosphoserine (S100). Residues 134–163 (RKREEKRNAGNAVRSAMKSEEQKIKDARKG) are a coiled coil. Residues 135–241 (KREEKRNAGN…SRKSKAELQS (107 aa)) form a disordered region. The segment covering 150-162 (MKSEEQKIKDARK) has biased composition (basic and acidic residues). K162 bears the N6-acetyllysine mark. The residue at position 181 (T181) is a Phosphothreonine. Residues 197 to 213 (ALKKPIKGKQAPRKKAQ) show a composition bias toward basic residues. One can recognise an SET domain in the interval 257-378 (EGMKIDLIDG…AGEELLYDYG (122 aa)). S-adenosyl-L-methionine-binding positions include 267–269 (KGR), Y312, and 339–340 (NH).

This sequence belongs to the class V-like SAM-binding methyltransferase superfamily. Histone-lysine methyltransferase family. PR/SET subfamily. In terms of assembly, interacts with L3MBTL1. As to quaternary structure, interacts with SIRT2 (phosphorylated form); the interaction is direct, stimulates KMT5A-mediated methyltransferase activity at histone H4 'Lys-20' (H4K20me1) and is increased in a H(2)O(2)-induced oxidative stress-dependent manner. In terms of processing, acetylated at Lys-162; does not affect methyltransferase activity. Deacetylated at Lys-162 possibly by SIRT2; does not change methyltransferase activity. Ubiquitinated and degraded by the DCX(DTL) complex.

It is found in the nucleus. It localises to the chromosome. It catalyses the reaction L-lysyl(20)-[histone H4] + S-adenosyl-L-methionine = N(6)-methyl-L-lysyl(20)-[histone H4] + S-adenosyl-L-homocysteine + H(+). It carries out the reaction L-lysyl-[protein] + S-adenosyl-L-methionine = N(6)-methyl-L-lysyl-[protein] + S-adenosyl-L-homocysteine + H(+). Its function is as follows. Protein-lysine N-methyltransferase that monomethylates both histones and non-histone proteins. Specifically monomethylates 'Lys-20' of histone H4 (H4K20me1). H4K20me1 is enriched during mitosis and represents a specific tag for epigenetic transcriptional repression. Mainly functions in euchromatin regions, thereby playing a central role in the silencing of euchromatic genes. Required for cell proliferation, probably by contributing to the maintenance of proper higher-order structure of DNA during mitosis. Involved in chromosome condensation and proper cytokinesis. Nucleosomes are preferred as substrate compared to free histones. Mediates monomethylation of p53/TP53 at 'Lys-382', leading to repress p53/TP53-target genes. Plays a negative role in TGF-beta response regulation and a positive role in cell migration. This Homo sapiens (Human) protein is N-lysine methyltransferase KMT5A.